Reading from the N-terminus, the 294-residue chain is Tryptophan 2,3-dioxygenase (294 aa).

Substrate is bound by residues 63-67, Tyr125, and Arg129; that span reads FIIQH. His252 lines the heme pocket. Residue Thr266 coordinates substrate.

This sequence belongs to the tryptophan 2,3-dioxygenase family. Homotetramer. Heme serves as cofactor.

The catalysed reaction is L-tryptophan + O2 = N-formyl-L-kynurenine. The protein operates within amino-acid degradation; L-tryptophan degradation via kynurenine pathway; L-kynurenine from L-tryptophan: step 1/2. Functionally, heme-dependent dioxygenase that catalyzes the oxidative cleavage of the L-tryptophan (L-Trp) pyrrole ring and converts L-tryptophan to N-formyl-L-kynurenine. Catalyzes the oxidative cleavage of the indole moiety. The polypeptide is Tryptophan 2,3-dioxygenase (Polaromonas sp. (strain JS666 / ATCC BAA-500)).